We begin with the raw amino-acid sequence, 359 residues long: Mannonate dehydratase (359 aa).

The protein belongs to the mannonate dehydratase family. Fe(2+) is required as a cofactor. Mn(2+) serves as cofactor.

It carries out the reaction D-mannonate = 2-dehydro-3-deoxy-D-gluconate + H2O. It participates in carbohydrate metabolism; pentose and glucuronate interconversion. Its function is as follows. Catalyzes the dehydration of D-mannonate. The chain is Mannonate dehydratase (uxuA) from Bacillus subtilis (strain 168).